The following is a 544-amino-acid chain: Chaperonin GroEL 1 (544 aa).

ATP is bound by residues 29-32 (TLGP), 86-90 (DGTTT), Gly413, 479-481 (NAA), and Asp495.

This sequence belongs to the chaperonin (HSP60) family. Forms a cylinder of 14 subunits composed of two heptameric rings stacked back-to-back. Interacts with the co-chaperonin GroES.

The protein resides in the cytoplasm. It catalyses the reaction ATP + H2O + a folded polypeptide = ADP + phosphate + an unfolded polypeptide.. Its function is as follows. Together with its co-chaperonin GroES, plays an essential role in assisting protein folding. The GroEL-GroES system forms a nano-cage that allows encapsulation of the non-native substrate proteins and provides a physical environment optimized to promote and accelerate protein folding. This is Chaperonin GroEL 1 from Synechococcus sp. (strain CC9902).